We begin with the raw amino-acid sequence, 74 residues long: uncharacterized protein (74 aa).

The signal sequence occupies residues 1–19 (MIGLIVVPILFAIKGIVVG). The tract at residues 26-74 (KFGKHSNTKDQKEDKDEDKRQSISQRKQHTEWPIEENRIQRRAPNQSAL) is disordered. 2 stretches are compositionally biased toward basic and acidic residues: residues 32 to 46 (NTKD…DKRQ) and 53 to 64 (QHTEWPIEENRI).

This is an uncharacterized protein from Saccharomyces cerevisiae (strain ATCC 204508 / S288c) (Baker's yeast).